Consider the following 361-residue polypeptide: Histidinol-phosphate aminotransferase (361 aa).

Lysine 220 bears the N6-(pyridoxal phosphate)lysine mark.

It belongs to the class-II pyridoxal-phosphate-dependent aminotransferase family. Histidinol-phosphate aminotransferase subfamily. Homodimer. Pyridoxal 5'-phosphate is required as a cofactor.

The enzyme catalyses L-histidinol phosphate + 2-oxoglutarate = 3-(imidazol-4-yl)-2-oxopropyl phosphate + L-glutamate. It functions in the pathway amino-acid biosynthesis; L-histidine biosynthesis; L-histidine from 5-phospho-alpha-D-ribose 1-diphosphate: step 7/9. This Syntrophus aciditrophicus (strain SB) protein is Histidinol-phosphate aminotransferase.